The following is a 421-amino-acid chain: Histidine--tRNA ligase (421 aa).

It belongs to the class-II aminoacyl-tRNA synthetase family. As to quaternary structure, homodimer.

The protein resides in the cytoplasm. The catalysed reaction is tRNA(His) + L-histidine + ATP = L-histidyl-tRNA(His) + AMP + diphosphate + H(+). This chain is Histidine--tRNA ligase, found in Alkaliphilus oremlandii (strain OhILAs) (Clostridium oremlandii (strain OhILAs)).